We begin with the raw amino-acid sequence, 274 residues long: Putative pyruvate, phosphate dikinase regulatory protein 1 (274 aa).

149–156 (GISRTSKT) contacts ADP.

Belongs to the pyruvate, phosphate/water dikinase regulatory protein family. PDRP subfamily.

The enzyme catalyses N(tele)-phospho-L-histidyl/L-threonyl-[pyruvate, phosphate dikinase] + ADP = N(tele)-phospho-L-histidyl/O-phospho-L-threonyl-[pyruvate, phosphate dikinase] + AMP + H(+). The catalysed reaction is N(tele)-phospho-L-histidyl/O-phospho-L-threonyl-[pyruvate, phosphate dikinase] + phosphate + H(+) = N(tele)-phospho-L-histidyl/L-threonyl-[pyruvate, phosphate dikinase] + diphosphate. Its function is as follows. Bifunctional serine/threonine kinase and phosphorylase involved in the regulation of the pyruvate, phosphate dikinase (PPDK) by catalyzing its phosphorylation/dephosphorylation. This is Putative pyruvate, phosphate dikinase regulatory protein 1 from Listeria monocytogenes serotype 4b (strain F2365).